A 548-amino-acid chain; its full sequence is Folylpolyglutamate synthase (548 aa).

Position 130 to 133 (130 to 133) interacts with ATP; that stretch reads GKGS. Positions 157, 234, and 262 each coordinate Mg(2+). ATP-binding residues include R382 and D396.

This sequence belongs to the folylpolyglutamate synthase family. A monovalent cation serves as cofactor.

It localises to the mitochondrion inner membrane. The protein localises to the mitochondrion matrix. Its subcellular location is the cytoplasm. It catalyses the reaction (6S)-5,6,7,8-tetrahydrofolyl-(gamma-L-Glu)(n) + L-glutamate + ATP = (6S)-5,6,7,8-tetrahydrofolyl-(gamma-L-Glu)(n+1) + ADP + phosphate + H(+). Its pathway is cofactor biosynthesis; tetrahydrofolylpolyglutamate biosynthesis. In terms of biological role, catalyzes conversion of folates to polyglutamate derivatives allowing concentration of folate compounds in the cell and the intracellular retention of these cofactors, which are important substrates for most of the folate-dependent enzymes that are involved in one-carbon transfer reactions involved in purine, pyrimidine and amino acid synthesis. Required for methionine synthesis and maintenance of intact mitochondrial DNA. Involved in telomere maintenance. This is Folylpolyglutamate synthase from Saccharomyces cerevisiae (strain RM11-1a) (Baker's yeast).